Consider the following 444-residue polypeptide: ATP-dependent protease ATPase subunit HslU (444 aa).

ATP contacts are provided by residues I20 and 62–67; that span reads GVGKTE. The segment at 130-158 is disordered; it reads EDRILDALVPPPRGASGEPERGEDNSARQ. ATP-binding residues include D257, E322, and R394.

The protein belongs to the ClpX chaperone family. HslU subfamily. A double ring-shaped homohexamer of HslV is capped on each side by a ring-shaped HslU homohexamer. The assembly of the HslU/HslV complex is dependent on binding of ATP.

Its subcellular location is the cytoplasm. ATPase subunit of a proteasome-like degradation complex; this subunit has chaperone activity. The binding of ATP and its subsequent hydrolysis by HslU are essential for unfolding of protein substrates subsequently hydrolyzed by HslV. HslU recognizes the N-terminal part of its protein substrates and unfolds these before they are guided to HslV for hydrolysis. This Bordetella pertussis (strain Tohama I / ATCC BAA-589 / NCTC 13251) protein is ATP-dependent protease ATPase subunit HslU.